Here is a 156-residue protein sequence, read N- to C-terminus: AP-1 complex subunit sigma-1 (156 aa).

It belongs to the adaptor complexes small subunit family. In terms of assembly, adaptor protein complex 1 (AP-1) is a heterotetramer composed of two large adaptins (gamma-type subunit and beta-type subunit), a medium adaptin (mu-type subunit) and a small adaptin (sigma-type subunit).

It is found in the golgi apparatus. It localises to the trans-Golgi network. Its subcellular location is the cytoplasmic vesicle. The protein resides in the clathrin-coated vesicle membrane. Functionally, subunit of clathrin-associated adaptor protein complex 1 that plays a role in protein sorting in the trans-Golgi network (TGN) and endosomes. The AP complexes mediate the recruitment of clathrin to membranes and the recognition of sorting signals within the cytosolic tails of transmembrane cargo molecules. Also involved in early steps of phagocytosis and macropinocytosis. This chain is AP-1 complex subunit sigma-1 (ap1s1), found in Dictyostelium discoideum (Social amoeba).